The primary structure comprises 205 residues: Arginine exporter protein ArgO (205 aa).

The next 6 membrane-spanning stretches (helical) occupy residues 1–21, 42–62, 67–87, 111–131, 147–167, and 185–205; these read MLAV…PLGP, LCAL…SALL, LLLA…GWGA, ILVT…DTFV, WFAL…ALLA, and LFVG…GFGL.

The protein belongs to the LysE/ArgO transporter (TC 2.A.75) family.

It localises to the cell inner membrane. It carries out the reaction L-arginine(in) = L-arginine(out). Involved in the export of arginine. Important to control the intracellular level of arginine and the correct balance between arginine and lysine. The sequence is that of Arginine exporter protein ArgO from Yersinia pseudotuberculosis serotype IB (strain PB1/+).